The chain runs to 167 residues: Small ribosomal subunit protein uS5 (167 aa).

Positions 12-75 constitute an S5 DRBM domain; it reads LQEKLIAVNR…EKARRNMVTV (64 aa).

It belongs to the universal ribosomal protein uS5 family. As to quaternary structure, part of the 30S ribosomal subunit. Contacts proteins S4 and S8.

Functionally, with S4 and S12 plays an important role in translational accuracy. Located at the back of the 30S subunit body where it stabilizes the conformation of the head with respect to the body. The chain is Small ribosomal subunit protein uS5 from Shewanella sp. (strain W3-18-1).